An 872-amino-acid chain; its full sequence is Exoglucanase A (872 aa).

The first 40 residues, 1–40 (MSTLGKRAGVRRRVRAVATAATATALVAVPLTTLATSASA), serve as a signal peptide directing secretion. The tract at residues 41–477 (APVHVDNPYA…PVIGGTTPVE (437 aa)) is catalytic. 2 cysteine pairs are disulfide-bonded: C140–C202 and C374–C428. D188 functions as the Proton donor in the catalytic mechanism. D410 serves as the catalytic Nucleophile. Fibronectin type-III domains lie at 484–569 (VPTG…TQSG), 579–667 (VPAG…TQTG), and 677–765 (VPTG…TQAA). Residues 763-872 (QAATSGGCTV…TLNGVACTLG (110 aa)) enclose the CBM2 domain. An intrachain disulfide couples C770 to C869.

Belongs to the glycosyl hydrolase 6 (cellulase B) family.

It carries out the reaction Hydrolysis of (1-&gt;4)-beta-D-glucosidic linkages in cellulose and cellotetraose, releasing cellobiose from the non-reducing ends of the chains.. Functionally, this enzyme hydrolyzes 1,4-beta-D-glucosidic linkages of cellulose. Weak activity against carboxymethylcellulose, bacterial microcrystalline cellulose and barley beta-glucan. Also has weak endoglucanase activity. Hydrolyzes glucosidic bonds with inversion of anomeric configuration. In Cellulomonas fimi (strain ATCC 484 / DSM 20113 / JCM 1341 / CCUG 24087 / LMG 16345 / NBRC 15513 / NCIMB 8980 / NCTC 7547 / NRS-133), this protein is Exoglucanase A (cbhA).